Here is a 496-residue protein sequence, read N- to C-terminus: PE-PGRS family protein PE_PGRS1 (496 aa).

Positions 4 to 94 (LITSPATVAA…VCYAAAETAN (91 aa)) constitute a PE domain. Positions 461–480 (LIGNGGDGGPGMFGGPGGAG) are disordered.

The protein belongs to the mycobacterial PE family. PGRS subfamily.

It localises to the secreted. The protein resides in the cell wall. It is found in the host mitochondrion. Its function is as follows. When expressed in host mitochondria, induces mitochondrial stress which results in mitochondrial membrane depolarization, up-regulation of mitochondrial superoxides and release of cytochrome-C in the cytoplasm. The cytochrome-C in cytoplasm triggers the activation of caspase-9, caspase-3 and caspase-7, leading to the apoptosis of host macrophages. Being a late expressing protein, apoptosis induction by PE_PGRS1 may facilitate the M.tuberculosis survival and silent expansion of its niche at the site of granuloma. When expressed in THP-1 macrophages, promotes the survival of mycobacteria within macrophages after a 24- to 48-hour infection by blocking endoplasmic reticulum stress and inhibiting host cell apoptosis. Can chelate excessive intracellular calcium in THP-1 macrophages, which reduces the concentration of intracellular free Ca(2+) and blocks the PERK-eIF2alpha-ATF4 axis, thereby inhibiting the endoplasmic reticulum stress caused by infection. It also reduces the apoptosis of THP-1 macrophages by decreasing the activation of caspase-3 and caspase-9. This Mycobacterium tuberculosis (strain ATCC 25618 / H37Rv) protein is PE-PGRS family protein PE_PGRS1.